The following is a 380-amino-acid chain: UPF0754 membrane protein Bsph_0374 (380 aa).

The next 2 helical transmembrane spans lie at 1–21 and 357–377; these read MDNF…IGGV and MITV…GLIV.

Belongs to the UPF0754 family.

The protein resides in the cell membrane. The protein is UPF0754 membrane protein Bsph_0374 of Lysinibacillus sphaericus (strain C3-41).